The primary structure comprises 301 residues: Ribosomal RNA small subunit methyltransferase A (301 aa).

Positions 23, 25, 50, 72, 97, and 149 each coordinate S-adenosyl-L-methionine.

Belongs to the class I-like SAM-binding methyltransferase superfamily. rRNA adenine N(6)-methyltransferase family. RsmA subfamily.

Its subcellular location is the cytoplasm. The catalysed reaction is adenosine(1518)/adenosine(1519) in 16S rRNA + 4 S-adenosyl-L-methionine = N(6)-dimethyladenosine(1518)/N(6)-dimethyladenosine(1519) in 16S rRNA + 4 S-adenosyl-L-homocysteine + 4 H(+). Functionally, specifically dimethylates two adjacent adenosines (A1518 and A1519) in the loop of a conserved hairpin near the 3'-end of 16S rRNA in the 30S particle. May play a critical role in biogenesis of 30S subunits. This chain is Ribosomal RNA small subunit methyltransferase A, found in Rickettsia conorii (strain ATCC VR-613 / Malish 7).